The primary structure comprises 564 residues: Eukaryotic translation initiation factor 3 subunit L (564 aa).

Residue Ser2 is modified to N-acetylserine. Phosphoserine is present on Ser21. One can recognise a PCI domain in the interval 331–537 (DAIRVFANIL…IHIADTKVAR (207 aa)). Residues Lys465 and Lys549 each carry the N6-acetyllysine modification.

In terms of assembly, component of the eukaryotic translation initiation factor 3 (eIF-3) complex, which is composed of 13 subunits: EIF3A, EIF3B, EIF3C, EIF3D, EIF3E, EIF3F, EIF3G, EIF3H, EIF3I, EIF3J, EIF3K, EIF3L and EIF3M. The eIF-3 complex appears to include 3 stable modules: module A is composed of EIF3A, EIF3B, EIF3G and EIF3I; module B is composed of EIF3F, EIF3H, and EIF3M; and module C is composed of EIF3C, EIF3D, EIF3E, EIF3K and EIF3L. EIF3C of module C binds EIF3B of module A and EIF3H of module B, thereby linking the three modules. EIF3J is a labile subunit that binds to the eIF-3 complex via EIF3B. The eIF-3 complex interacts with RPS6KB1 under conditions of nutrient depletion. Mitogenic stimulation leads to binding and activation of a complex composed of MTOR and RPTOR, leading to phosphorylation and release of RPS6KB1 and binding of EIF4B to eIF-3. Interacts with RRN3.

The protein resides in the cytoplasm. Its function is as follows. Component of the eukaryotic translation initiation factor 3 (eIF-3) complex, which is required for several steps in the initiation of protein synthesis. The eIF-3 complex associates with the 40S ribosome and facilitates the recruitment of eIF-1, eIF-1A, eIF-2:GTP:methionyl-tRNAi and eIF-5 to form the 43S pre-initiation complex (43S PIC). The eIF-3 complex stimulates mRNA recruitment to the 43S PIC and scanning of the mRNA for AUG recognition. The eIF-3 complex is also required for disassembly and recycling of post-termination ribosomal complexes and subsequently prevents premature joining of the 40S and 60S ribosomal subunits prior to initiation. The eIF-3 complex specifically targets and initiates translation of a subset of mRNAs involved in cell proliferation, including cell cycling, differentiation and apoptosis, and uses different modes of RNA stem-loop binding to exert either translational activation or repression. Functionally, (Microbial infection) In case of FCV infection, plays a role in the ribosomal termination-reinitiation event leading to the translation of VP2. The protein is Eukaryotic translation initiation factor 3 subunit L of Homo sapiens (Human).